The chain runs to 340 residues: Heat-inducible transcription repressor HrcA (340 aa).

The protein belongs to the HrcA family.

Negative regulator of class I heat shock genes (grpE-dnaK-dnaJ and groELS operons). Prevents heat-shock induction of these operons. The protein is Heat-inducible transcription repressor HrcA of Phytoplasma australiense.